A 239-amino-acid polypeptide reads, in one-letter code: 2-C-methyl-D-erythritol 4-phosphate cytidylyltransferase (239 aa).

This sequence belongs to the IspD/TarI cytidylyltransferase family. IspD subfamily.

The catalysed reaction is 2-C-methyl-D-erythritol 4-phosphate + CTP + H(+) = 4-CDP-2-C-methyl-D-erythritol + diphosphate. It participates in isoprenoid biosynthesis; isopentenyl diphosphate biosynthesis via DXP pathway; isopentenyl diphosphate from 1-deoxy-D-xylulose 5-phosphate: step 2/6. Its function is as follows. Catalyzes the formation of 4-diphosphocytidyl-2-C-methyl-D-erythritol from CTP and 2-C-methyl-D-erythritol 4-phosphate (MEP). The chain is 2-C-methyl-D-erythritol 4-phosphate cytidylyltransferase from Ruthia magnifica subsp. Calyptogena magnifica.